The primary structure comprises 393 residues: Methylthioribose kinase (393 aa).

ATP is bound by residues asparagine 38, lysine 53, and 107–109 (EDL). Aspartate 225 provides a ligand contact to substrate. Residue 242–244 (DPE) participates in ATP binding. Arginine 332 lines the substrate pocket.

The protein belongs to the methylthioribose kinase family. In terms of assembly, homodimer.

It catalyses the reaction 5-(methylsulfanyl)-D-ribose + ATP = 5-(methylsulfanyl)-alpha-D-ribose 1-phosphate + ADP + H(+). Its pathway is amino-acid biosynthesis; L-methionine biosynthesis via salvage pathway; S-methyl-5-thio-alpha-D-ribose 1-phosphate from S-methyl-5'-thioadenosine (hydrolase route): step 2/2. Catalyzes the phosphorylation of methylthioribose into methylthioribose-1-phosphate. The protein is Methylthioribose kinase of Bacillus thuringiensis subsp. konkukian (strain 97-27).